A 76-amino-acid chain; its full sequence is Precursor of CEP7 (76 aa).

An N-terminal signal peptide occupies residues 1–27; it reads MAKCTLTSLILLLIVLVLIQESHIVEG. The propeptide occupies 28 to 61; that stretch reads RPLKSSRISNVSKKFAAGNSNLSSKLTTEDHSLD. Residues asparagine 37 and asparagine 48 are each glycosylated (N-linked (GlcNAc...) asparagine). Residues 49–76 are disordered; it reads LSSKLTTEDHSLDAFRPTNPGNSPGIGH. 3 positions are modified to hydroxyproline: proline 65, proline 68, and proline 72.

The protein belongs to the C-terminally encoded plant signaling peptide (CEP) family. In terms of assembly, interacts with CEP receptors (e.g. CEPR1 and CEPR2). The mature small signaling peptide is generated by proteolytic processing of the longer precursor.

It is found in the secreted. It localises to the extracellular space. Its subcellular location is the apoplast. Its function is as follows. Extracellular signaling peptide that may regulate primary root growth rate and systemic nitrogen (N)-demand signaling. Mediates up-regulation of genes involved in N uptake and assimilation pathways. The protein is Precursor of CEP7 of Arabidopsis thaliana (Mouse-ear cress).